We begin with the raw amino-acid sequence, 270 residues long: Glucosamine-6-phosphate deaminase (270 aa).

The Proton acceptor; for enolization step role is filled by aspartate 72. Aspartate 141 functions as the For ring-opening step in the catalytic mechanism. Histidine 143 (proton acceptor; for ring-opening step) is an active-site residue. The For ring-opening step role is filled by glutamate 148.

Belongs to the glucosamine/galactosamine-6-phosphate isomerase family. NagB subfamily. As to quaternary structure, homohexamer.

It catalyses the reaction alpha-D-glucosamine 6-phosphate + H2O = beta-D-fructose 6-phosphate + NH4(+). It functions in the pathway amino-sugar metabolism; N-acetylneuraminate degradation; D-fructose 6-phosphate from N-acetylneuraminate: step 5/5. With respect to regulation, allosterically activated by N-acetylglucosamine 6-phosphate (GlcNAc6P). Its function is as follows. Catalyzes the reversible isomerization-deamination of glucosamine 6-phosphate (GlcN6P) to form fructose 6-phosphate (Fru6P) and ammonium ion. This Haemophilus influenzae (strain 86-028NP) protein is Glucosamine-6-phosphate deaminase.